Consider the following 123-residue polypeptide: Large ribosomal subunit protein bL12 (123 aa).

The protein belongs to the bacterial ribosomal protein bL12 family. As to quaternary structure, homodimer. Part of the ribosomal stalk of the 50S ribosomal subunit. Forms a multimeric L10(L12)X complex, where L10 forms an elongated spine to which 2 to 4 L12 dimers bind in a sequential fashion. Binds GTP-bound translation factors.

Functionally, forms part of the ribosomal stalk which helps the ribosome interact with GTP-bound translation factors. Is thus essential for accurate translation. The sequence is that of Large ribosomal subunit protein bL12 from Neisseria perflava.